The sequence spans 353 residues: UPF0283 membrane protein YcjF (353 aa).

A compositionally biased stretch (basic and acidic residues) spans 1 to 19 (MSEPLKPRIDFAEPLKEEP). The disordered stretch occupies residues 1–35 (MSEPLKPRIDFAEPLKEEPTSAFKAQQTFSEAESR). Helical transmembrane passes span 70–90 (MVMG…VQWT), 100–120 (VALG…GSVV), and 213–233 (ESTL…FIAW).

This sequence belongs to the UPF0283 family.

It is found in the cell inner membrane. This Salmonella enteritidis PT4 (strain P125109) protein is UPF0283 membrane protein YcjF.